The sequence spans 449 residues: tRNA modification GTPase MnmE (449 aa).

(6S)-5-formyl-5,6,7,8-tetrahydrofolate-binding residues include arginine 24, glutamate 81, and lysine 121. The region spanning 218–375 is the TrmE-type G domain; that stretch reads GLVVAITGPP…LIAALGKFAA (158 aa). GTP is bound by residues 228 to 233, 247 to 253, and 272 to 275; these read NVGKST, SPHAGTT, and DTAG. 2 residues coordinate Mg(2+): serine 232 and threonine 253. Lysine 449 is a binding site for (6S)-5-formyl-5,6,7,8-tetrahydrofolate.

The protein belongs to the TRAFAC class TrmE-Era-EngA-EngB-Septin-like GTPase superfamily. TrmE GTPase family. As to quaternary structure, homodimer. Heterotetramer of two MnmE and two MnmG subunits. It depends on K(+) as a cofactor.

The protein resides in the cytoplasm. Exhibits a very high intrinsic GTPase hydrolysis rate. Involved in the addition of a carboxymethylaminomethyl (cmnm) group at the wobble position (U34) of certain tRNAs, forming tRNA-cmnm(5)s(2)U34. In Rhodopseudomonas palustris (strain BisB18), this protein is tRNA modification GTPase MnmE.